The sequence spans 547 residues: Sodium/hydrogen exchanger 9B2 (547 aa).

The tract at residues 1–68 (MEDEDKTAEC…PQDSPTEPNG (68 aa)) is disordered. Topologically, residues 1–86 (MEDEDKTAEC…ACPPRGCLAR (86 aa)) are cytoplasmic. The span at 23–45 (APPHHELQEERVMSLRGTDRSEP) shows a compositional bias: basic and acidic residues. At Ser49 the chain carries Phosphoserine. Residues 87-104 (VITNGTMVVLLWAMVWSV) traverse the membrane as a helical segment. At 105-113 (TGPECLPGG) the chain is on the extracellular side. The chain crosses the membrane as a helical span at residues 114 to 133 (NLFGIIILFYCSITGGKLFG). The Cytoplasmic segment spans residues 134–144 (LIKFPTLPPLP). Residues 145–161 (PLLGMLLAGFLLRNIPV) form a helical membrane-spanning segment. Topologically, residues 162 to 171 (INDSVRIQHK) are extracellular. The helical transmembrane segment at 172–189 (WSSSLRSIALSVILVRAG) threads the bilayer. Over 190-200 (LGLDSKALRKL) the chain is Cytoplasmic. The helical transmembrane segment at 201–227 (KGVCVRLAMGPCIVEACASAILSHFLM) threads the bilayer. The Extracellular segment spans residues 228-233 (GLPWQW). A helical transmembrane segment spans residues 234-242 (GFILGFVVG). Residues 243 to 270 (AVSPAVVVPSMLLLQEGGYGVGKGIPTL) lie on the Cytoplasmic side of the membrane. Val244, Gly275, Asp278, and Asp279 together coordinate Na(+). The chain crosses the membrane as a helical span at residues 271 to 290 (LMAAGSFDDILAITGFNTCL). The Extracellular portion of the chain corresponds to 291–300 (GVAFSTGSTV). The chain crosses the membrane as a helical span at residues 301–324 (FNIFRGILEVVIGVAAGSFLGFFI). Topologically, residues 325 to 339 (QYFPSRDQDNLVWKR) are cytoplasmic. Residues 340–357 (AFLVLGFAVLAVFSSVYF) form a helical membrane-spanning segment. Residues 358 to 361 (SFPG) are Extracellular-facing. A helical membrane pass occupies residues 362 to 373 (SGGLCTLVMAFL). Residues 374 to 390 (AGMRWTDKKSEVEKVIA) are Cytoplasmic-facing. The chain crosses the membrane as a helical span at residues 391–411 (VTWDVFQPLLFGLIGAEVSIV). Over 412-417 (SLRAET) the chain is Extracellular. A helical transmembrane segment spans residues 418-440 (VGLCVATLSIAVLIRILTTFLMV). At 441–461 (CFAGFNIKEKIFISFAWLPKA) the chain is on the cytoplasmic side. Residues 462–473 (TVQAAIGSVALD) form a helical membrane-spanning segment. Over 474–486 (TARSHGEKQLEDY) the chain is Extracellular. The chain crosses the membrane as a helical span at residues 487-509 (GMDVLTVAFLAILITAPIGSLLI). The Cytoplasmic segment spans residues 510–547 (GLLGPRVLQKSEHRTEEEVQGETSAHIQRKPEDSITEA). A disordered region spans residues 522-547 (HRTEEEVQGETSAHIQRKPEDSITEA). The span at 538–547 (RKPEDSITEA) shows a compositional bias: basic and acidic residues.

This sequence belongs to the monovalent cation:proton antiporter 1 (CPA1) transporter (TC 2.A.36) family. In terms of assembly, homodimer; dimerization is essential for SLC9B2 activity. Lipids seem to play a role in the stabilization of the dimerization subdomain. As to expression, widely expressed. However expression seems to be restricted to specific cell types within individual organs, e.g. osteoclasts in the bone, distal tubules of the kidney or beta-cells of Langerhans islets. In sperm specifically present in the principal piece of sperm tail (at protein level).

Its subcellular location is the cell membrane. The protein localises to the mitochondrion membrane. The protein resides in the endosome membrane. It localises to the lysosome membrane. It is found in the recycling endosome membrane. Its subcellular location is the cytoplasmic vesicle. The protein localises to the secretory vesicle. The protein resides in the synaptic vesicle membrane. It localises to the cell projection. It is found in the cilium. Its subcellular location is the flagellum membrane. The protein localises to the basolateral cell membrane. The protein resides in the apical cell membrane. It carries out the reaction Na(+)(in) + H(+)(out) = Na(+)(out) + H(+)(in). The catalysed reaction is Li(+)(out) + H(+)(in) = Li(+)(in) + H(+)(out). It catalyses the reaction Li(+)(in) + Na(+)(out) = Li(+)(out) + Na(+)(in). Allosterically inhibited by the N-terminal domain. Inhibited by phloretin. Functionally, electroneutral Na(+) Li(+)/H(+) antiporter that extrudes Na(+) or Li(+) in exchange for external protons across the membrane. Uses the proton gradient/membrane potential to extrude sodium. Contributes to the regulation of intracellular pH and sodium homeostasis. Also able to mediate Na(+)/Li(+) antiporter activity in kidney. May play a physiological role in renal tubular function and blood pressure homeostasis. Plays an important role for insulin secretion and clathrin-mediated endocytosis in beta-cells. Involved in sperm motility and fertility. It is controversial whether SLC9B2 plays a role in osteoclast differentiation or not. The polypeptide is Sodium/hydrogen exchanger 9B2 (Mus musculus (Mouse)).